A 394-amino-acid polypeptide reads, in one-letter code: Chorismate synthase (394 aa).

NADP(+) is bound by residues arginine 40 and arginine 46. Residues 135–137 and 255–256 each bind FMN; these read RAS and QA. The tract at residues 270–291 is disordered; that stretch reads RRRGSGAHDEIEPAGAGSRRVR. FMN contacts are provided by residues glycine 302, 317-321, and arginine 343; that span reads KPISS.

Belongs to the chorismate synthase family. In terms of assembly, homotetramer. It depends on FMNH2 as a cofactor.

It catalyses the reaction 5-O-(1-carboxyvinyl)-3-phosphoshikimate = chorismate + phosphate. The protein operates within metabolic intermediate biosynthesis; chorismate biosynthesis; chorismate from D-erythrose 4-phosphate and phosphoenolpyruvate: step 7/7. Its function is as follows. Catalyzes the anti-1,4-elimination of the C-3 phosphate and the C-6 proR hydrogen from 5-enolpyruvylshikimate-3-phosphate (EPSP) to yield chorismate, which is the branch point compound that serves as the starting substrate for the three terminal pathways of aromatic amino acid biosynthesis. This reaction introduces a second double bond into the aromatic ring system. The sequence is that of Chorismate synthase from Frankia casuarinae (strain DSM 45818 / CECT 9043 / HFP020203 / CcI3).